The chain runs to 707 residues: Eomesodermin homolog (707 aa).

The span at 27 to 42 shows a compositional bias: gly residues; that stretch reads GGGGGGGGGGGGGGGS. Residues 27 to 125 form a disordered region; sequence GGGGGGGGGG…GSPCAEEELP (99 aa). The segment covering 73–93 has biased composition (low complexity); it reads AGSAEPAGAGAGAPAAMLSDA. At Ser-117 the chain carries Phosphoserine. The T-box DNA-binding region spans 278–458; that stretch reads LWLKFHRHQT…HNPFAKGFRD (181 aa). The residue at position 473 (Thr-473) is a Phosphothreonine. Positions 592–707 are required for transcription activation; sequence AMAGWGGRGA…GAYYAFYTSP (116 aa). Residues 642–689 are disordered; sequence TPPSIKSLDSSDSGVYNSACKRKRLSPSTPSNGNSPPIKCEDINTEEY. Over residues 648–657 the composition is skewed to polar residues; sequence SLDSSDSGVY. A compositionally biased stretch (low complexity) spans 667-678; it reads SPSTPSNGNSPP. The span at 680–689 shows a compositional bias: basic and acidic residues; that stretch reads KCEDINTEEY.

Expressed in CD8+ T-cells.

It localises to the nucleus. Functionally, functions as a transcriptional activator playing a crucial role during development. Functions in trophoblast differentiation and later in gastrulation, regulating both mesoderm delamination and endoderm specification. Plays a role in brain development being required for the specification and the proliferation of the intermediate progenitor cells and their progeny in the cerebral cortex. Required for differentiation and migration of unipolar dendritic brush cells. Also involved in the differentiation of CD8+ T-cells during immune response regulating the expression of lytic effector genes. In Mus musculus (Mouse), this protein is Eomesodermin homolog (Eomes).